A 427-amino-acid polypeptide reads, in one-letter code: Histidine--tRNA ligase (427 aa).

This sequence belongs to the class-II aminoacyl-tRNA synthetase family. As to quaternary structure, homodimer.

The protein resides in the cytoplasm. The catalysed reaction is tRNA(His) + L-histidine + ATP = L-histidyl-tRNA(His) + AMP + diphosphate + H(+). In Corynebacterium urealyticum (strain ATCC 43042 / DSM 7109), this protein is Histidine--tRNA ligase.